A 103-amino-acid chain; its full sequence is Carboxysome shell protein CcmK3 (103 aa).

Residues 4–91 (AVGVIQTLGF…PPENVLAVLP (88 aa)) form the BMC domain.

Belongs to the bacterial microcompartments protein family. CcmK subfamily. Forms mixed heterohexamers with CcmK4, probably with 1:5 CcmK3:CcmK4 stoichiometry. Only very weak interactions with CcmK1 and CcmK2 were seen. Bulky residues in the pore region probably preclude the formation of homohexamers by this subunit.

Its subcellular location is the carboxysome. Functionally, a probably minor shell protein component of the carboxysome, a polyhedral inclusion where RuBisCO (ribulose bisphosphate carboxylase, rbcL-rbcS) is sequestered. This subunit probably does not form homohexamers. The polypeptide is Carboxysome shell protein CcmK3 (Synechocystis sp. (strain ATCC 27184 / PCC 6803 / Kazusa)).